Here is a 1004-residue protein sequence, read N- to C-terminus: UPF0182 protein Mflv_4654 (1004 aa).

7 consecutive transmembrane segments (helical) span residues 18–38 (FLIAVSAVLVLLLLLGPRFID), 63–83 (LVIFFVVAILVGAVVFAGLAL), 114–134 (LIGIGVPLAIGVLAGFVGQSY), 176–196 (FVGVFLAFLANLLGHYLFGGI), 211–231 (IQLITLVGLLMLLKAVAYWFD), 260–280 (KLILMAIAVICAVAVFSAIFL), and 288–308 (IGVVLLLLSSLVVGAGWPLVV). The segment covering 896–940 (PGADATATGPAATEPPAGQAPQTQGNNTAPPAAQPPNRQGQAPAG) has biased composition (low complexity). The disordered stretch occupies residues 896-960 (PGADATATGP…TGPTQLSAAK (65 aa)).

This sequence belongs to the UPF0182 family.

It is found in the cell membrane. This chain is UPF0182 protein Mflv_4654, found in Mycolicibacterium gilvum (strain PYR-GCK) (Mycobacterium gilvum (strain PYR-GCK)).